We begin with the raw amino-acid sequence, 395 residues long: D-alanine--D-alanine ligase (395 aa).

An ATP-grasp domain is found at 172–391 (KVVLDAAGIP…YTELITRLIE (220 aa)). 204–266 (DAGLTYPLFV…EQGIDGREIE (63 aa)) is an ATP binding site. Positions 345, 358, and 360 each coordinate Mg(2+).

This sequence belongs to the D-alanine--D-alanine ligase family. It depends on Mg(2+) as a cofactor. The cofactor is Mn(2+).

Its subcellular location is the cytoplasm. It catalyses the reaction 2 D-alanine + ATP = D-alanyl-D-alanine + ADP + phosphate + H(+). It participates in cell wall biogenesis; peptidoglycan biosynthesis. In terms of biological role, cell wall formation. The protein is D-alanine--D-alanine ligase of Bifidobacterium longum (strain DJO10A).